The chain runs to 318 residues: Trans-prenyltransferase (318 aa).

Residues 1 to 21 form a helical membrane-spanning segment; that stretch reads MLHLIYISIIVVLIIILISYT. Isopentenyl diphosphate-binding residues include Lys85, Arg88, and His122. Mg(2+) contacts are provided by Asp129 and Asp135. Arg140 provides a ligand contact to dimethylallyl diphosphate. Arg141 contacts isopentenyl diphosphate. Dimethylallyl diphosphate is bound by residues Lys216, Thr217, and Gln254.

This sequence belongs to the FPP/GGPP synthase family. Asfivirus trans-prenyltransferase subfamily. The cofactor is Mg(2+).

The protein resides in the host endoplasmic reticulum. The protein localises to the host membrane. The catalysed reaction is isopentenyl diphosphate + dimethylallyl diphosphate = (2E)-geranyl diphosphate + diphosphate. It catalyses the reaction isopentenyl diphosphate + (2E)-geranyl diphosphate = (2E,6E)-farnesyl diphosphate + diphosphate. It carries out the reaction isopentenyl diphosphate + (2E,6E)-farnesyl diphosphate = (2E,6E,10E)-geranylgeranyl diphosphate + diphosphate. The enzyme catalyses isopentenyl diphosphate + (2E,6E,10E)-geranylgeranyl diphosphate = (2E,6E,10E,14E)-geranylfarnesyl diphosphate + diphosphate. Its pathway is isoprenoid biosynthesis; farnesyl diphosphate biosynthesis; farnesyl diphosphate from geranyl diphosphate and isopentenyl diphosphate: step 1/1. It functions in the pathway isoprenoid biosynthesis; geranyl diphosphate biosynthesis; geranyl diphosphate from dimethylallyl diphosphate and isopentenyl diphosphate: step 1/1. It participates in isoprenoid biosynthesis; geranylgeranyl diphosphate biosynthesis; geranylgeranyl diphosphate from farnesyl diphosphate and isopentenyl diphosphate: step 1/1. In terms of biological role, trans-prenyltransferase that catalyzes the sequential condensation of isopentenyl diphosphate (IPP) with different allylic diphosphates, such as dimethylallyl diphosphate (DMAPP), geranyl diphosphate (GPP), farnesyl diphosphate (FPP) and geranylgeranyl diphosphate (GGPP), farnesyl diphosphate being the best allylic substrate. The polypeptide is Trans-prenyltransferase (African swine fever virus (isolate Warthog/Namibia/Wart80/1980) (ASFV)).